The primary structure comprises 306 residues: UDP-N-acetylenolpyruvoylglucosamine reductase (306 aa).

The region spanning Arg30–Arg216 is the FAD-binding PCMH-type domain. Arg180 is an active-site residue. The active-site Proton donor is Ser230. Glu301 is a catalytic residue.

Belongs to the MurB family. It depends on FAD as a cofactor.

The protein resides in the cytoplasm. It catalyses the reaction UDP-N-acetyl-alpha-D-muramate + NADP(+) = UDP-N-acetyl-3-O-(1-carboxyvinyl)-alpha-D-glucosamine + NADPH + H(+). It functions in the pathway cell wall biogenesis; peptidoglycan biosynthesis. Functionally, cell wall formation. The sequence is that of UDP-N-acetylenolpyruvoylglucosamine reductase from Petrotoga mobilis (strain DSM 10674 / SJ95).